The chain runs to 32 residues: Dermaseptin-L1 (32 aa).

As to expression, expressed by the skin glands.

It is found in the secreted. In terms of biological role, antimicrobial peptide active against the Gram-negative bacterium E.coli (MIC=8 uM) but inactive against the Gram-positive bacterium S.aureus. Also inhibits growth of zoospores of the chytrid fungus B.dendrobatidis at high concentrations (above 25 uM). Shows anticancer activities since it is cytolytic against HepG2 human hepatoma-derived cells (LC(50)=45 uM). Is only weakly hemolytic on human erythrocytes. This is Dermaseptin-L1 from Agalychnis lemur (Lemur leaf frog).